Here is a 936-residue protein sequence, read N- to C-terminus: Protein NNF2 (936 aa).

Residues 1–41 lie on the Lumenal side of the membrane; it reads MEEQFTNQKKVSHLQSLMNTKRSEQPTEFAKKHRFKDTLAL. Lys10 is covalently cross-linked (Glycyl lysine isopeptide (Lys-Gly) (interchain with G-Cter in ubiquitin)). Residues 42–62 form a helical membrane-spanning segment; it reads FLVFLSFNHFTSLCLLVSFIV. The Cytoplasmic segment spans residues 63-120; it reads ATKCKDFLANCFIILFLSKKPSRHIGEVAHIDISTSKVTNGSSNRKSNSRFFGNSKNS. Residues 121-141 form a helical membrane-spanning segment; sequence FVIPIPVLICEILFAMLLKIY. At 142 to 245 the chain is on the lumenal side; it reads GGDYFVKPIK…FKMLGKHSDS (104 aa). The chain crosses the membrane as a helical span at residues 246 to 266; that stretch reads MIYYLSFHILFFSFASSLLHP. Topologically, residues 267 to 936 are cytoplasmic; sequence HRQTAENKPL…NIHSLIGNSY (670 aa). 3 disordered regions span residues 297-351, 387-437, and 512-533; these read RISS…SNIL, GSNS…DFFS, and TSEN…QEKH. The segment covering 299-308 has biased composition (low complexity); it reads SSSSSVSADS. The segment covering 325-351 has biased composition (polar residues); it reads LSSSNQTIHPSQQNNSPVPLSSHSNIL. Composition is skewed to low complexity over residues 394–405 and 414–428; these read TTTTSTTTSPTT and SLSN…SNGN. The segment covering 512 to 529 has biased composition (polar residues); it reads TSENSLTPTNSNTSYVSN.

Its subcellular location is the endoplasmic reticulum membrane. The polypeptide is Protein NNF2 (NNF2) (Saccharomyces cerevisiae (strain ATCC 204508 / S288c) (Baker's yeast)).